Consider the following 222-residue polypeptide: Lipid A 4'-phosphatase (222 aa).

Topologically, residues 1-3 (MAR) are cytoplasmic. Residues 4–24 (FHIILGLVVCFFAWIFFLIFP) form a helical membrane-spanning segment. Topologically, residues 25-58 (NLDIQFAGHFYNSSAHQFIGGYDGFLGFLHWFAR) are periplasmic. The helical transmembrane segment at 59–79 (FFPIFFSIIVILFLLGSLFID) threads the bilayer. At 80 to 87 (KFKIKYRK) the chain is on the cytoplasmic side. The helical transmembrane segment at 88–108 (AIFFIAVCLWIGPGLVVNYVF) threads the bilayer. Residues 109–144 (KDHWGRPRPVMVEQFNGDKIFQPPFVISSQCDKNCS) lie on the Periplasmic side of the membrane. A helical transmembrane segment spans residues 145 to 165 (FVCGDASMGFWLFAFMPLLAT). The Cytoplasmic portion of the chain corresponds to 166–169 (RKKK). The chain crosses the membrane as a helical span at residues 170-190 (LVAFIAAVVAGGGLGLMRMSQ). Residues 191–193 (GGH) lie on the Periplasmic side of the membrane. A helical transmembrane segment spans residues 194–214 (FFSDVVFCGIFVYISTWVVYA). The Cytoplasmic segment spans residues 215 to 222 (LMYRKKEY).

The protein belongs to the lipid A LpxF 4'-phosphatase family.

It localises to the cell inner membrane. It participates in bacterial outer membrane biogenesis; LPS lipid A biosynthesis. Functionally, removes the 4'-phosphate moiety from lipid IV(A) (a tetraacylated precursor of lipid A) and from pentaacylated lipid A, but not from hexaacylated lipid A (as is found in E.coli). Does not dephosphorylate phosphatidic acid, phosphatidylglycerophosphate, or the 1-phosphate group of lipid A and lipid A precursors. Its expression in E.coli confers resistance to the cationic antimicrobial peptide (CAMP) polymyxin B. Plays a critical role in the ability of the bacteria to avoid the host's innate immune system, especially the bactericidal action of CAMPs, although whether it is CAMP-sensitivity or increased sensitivity to the immune system is not clear. The polypeptide is Lipid A 4'-phosphatase (Francisella tularensis subsp. novicida (strain U112)).